The following is a 253-amino-acid chain: Claudin domain-containing protein 1 (253 aa).

A helical transmembrane segment spans residues 5 to 25 (FATAFVIACVLSLISTIYMAA). N-linked (GlcNAc...) asparagine glycosylation is found at N42 and N72. 3 consecutive transmembrane segments (helical) span residues 141–161 (FLLPFVSLGLMCFGALIGLCA), 175–195 (ILHLLAGLCTLGSVSCYVAGI), and 216–236 (FCLACVSAPLQFMASALFIWA).

It belongs to the PMP-22/EMP/MP20 family.

Its subcellular location is the cell junction. The protein resides in the tight junction. It localises to the cell membrane. Plays a role in negatively regulating the permeability of cells to small molecules. The protein is Claudin domain-containing protein 1 (CLDND1) of Macaca fascicularis (Crab-eating macaque).